A 20-amino-acid chain; its full sequence is Phospholipase A2 D5 (20 aa).

Requires Ca(2+) as cofactor. In terms of processing, contains seven disulfide bonds. In terms of tissue distribution, expressed by the venom gland.

It is found in the secreted. The enzyme catalyses a 1,2-diacyl-sn-glycero-3-phosphocholine + H2O = a 1-acyl-sn-glycero-3-phosphocholine + a fatty acid + H(+). Its function is as follows. PLA2 catalyzes the calcium-dependent hydrolysis of the 2-acyl groups in 3-sn-phosphoglycerides. The polypeptide is Phospholipase A2 D5 (Micrurus pyrrhocryptus (Coral snake)).